Here is a 48-residue protein sequence, read N- to C-terminus: Putative ATP synthase protein 8-like protein (48 aa).

A helical transmembrane segment spans residues 17–37 (GFLVILLTLLLLSYAFLSMIL).

It belongs to the ATPase protein 8 family.

The protein localises to the membrane. This is Putative ATP synthase protein 8-like protein from Eremothecium gossypii (strain ATCC 10895 / CBS 109.51 / FGSC 9923 / NRRL Y-1056) (Yeast).